A 664-amino-acid chain; its full sequence is Prelamin-A/C (664 aa).

Methionine 1 is subject to N-acetylmethionine. The disordered stretch occupies residues 1–24 (METPSQRRATRSGAQASSTPLSPT). The tract at residues 1 to 33 (METPSQRRATRSGAQASSTPLSPTRITRLQEKE) is head. The interval 1–130 (METPSQRRAT…TKKEGDLMAA (130 aa)) is interaction with MLIP. Threonine 3 bears the Phosphothreonine mark. Serine 5 bears the Phosphoserine mark. Threonine 10 carries the post-translational modification Phosphothreonine. Phosphoserine occurs at positions 12 and 18. Threonine 19 carries the phosphothreonine modification. A Phosphoserine modification is found at serine 22. One can recognise an IF rod domain in the interval 31–387 (EKEDLQELND…KLLEGEEERL (357 aa)). Position 32 is an N6-acetyllysine; alternate (lysine 32). N6-succinyllysine; alternate is present on lysine 32. Residue lysine 32 forms a Glycyl lysine isopeptide (Lys-Gly) (interchain with G-Cter in SUMO2); alternate linkage. Positions 34–70 (DLQELNDRLAVYIDRVRSLETENAGLRLRITESEEVV) are coil 1A. A phosphoserine mark is found at serine 51, serine 66, and serine 71. Residues 71-80 (SREVSGIKSA) are linker 1. 2 positions are modified to N6-acetyllysine: lysine 78 and lysine 97. Residues 81 to 218 (YEAELGDARK…NIYSEELRET (138 aa)) are coil 1B. A Glycyl lysine isopeptide (Lys-Gly) (interchain with G-Cter in SUMO2) cross-link involves residue lysine 97. Serine 107 is subject to Phosphoserine. An N6-acetyllysine mark is found at lysine 108, lysine 114, lysine 123, lysine 135, lysine 144, and lysine 155. At lysine 171 the chain carries N6-acetyllysine; alternate. Residue lysine 171 is modified to N6-succinyllysine; alternate. Lysine 171 participates in a covalent cross-link: Glycyl lysine isopeptide (Lys-Gly) (interchain with G-Cter in SUMO2); alternate. Residues lysine 180, lysine 201, and lysine 208 each carry the N6-acetyllysine modification. Lysine 201 participates in a covalent cross-link: Glycyl lysine isopeptide (Lys-Gly) (interchain with G-Cter in SUMO2); alternate. A Glycyl lysine isopeptide (Lys-Gly) (interchain with G-Cter in SUMO); alternate cross-link involves residue lysine 201. Lysine 208 participates in a covalent cross-link: Glycyl lysine isopeptide (Lys-Gly) (interchain with G-Cter in SUMO2). Serine 212 carries the phosphoserine modification. Residues lysine 219 and lysine 233 each participate in a glycyl lysine isopeptide (Lys-Gly) (interchain with G-Cter in SUMO2) cross-link. Residues 219-242 (KRRHETRLVEIDNGKQREFESRLA) form a linker 2 region. Residues lysine 233, lysine 260, lysine 265, and lysine 270 each carry the N6-acetyllysine modification. Residues 243 to 383 (DALQDLRAQH…HAYRKLLEGE (141 aa)) form a coil 2 region. Lysine 260 is covalently cross-linked (Glycyl lysine isopeptide (Lys-Gly) (interchain with G-Cter in SUMO2); alternate). Lysine 270 is covalently cross-linked (Glycyl lysine isopeptide (Lys-Gly) (interchain with G-Cter in SUMO2); alternate). A phosphoserine mark is found at serine 277, serine 282, serine 301, and serine 307. Lysine 311 participates in a covalent cross-link: Glycyl lysine isopeptide (Lys-Gly) (interchain with G-Cter in SUMO2); alternate. Lysine 311, lysine 316, and lysine 341 each carry N6-acetyllysine. Glycyl lysine isopeptide (Lys-Gly) (interchain with G-Cter in SUMO2) cross-links involve residues lysine 366 and lysine 378. The segment at 384 to 442 (EERLRLSPSPTSQRSRGRASSHSSQTQSGGSVTKKRKLESSESRSSFSQHARTSGRVAV) is disordered. Residues 384–664 (EERLRLSPSP…TQSPQNCSIM (281 aa)) form a tail region. Serine 390, serine 392, serine 395, serine 398, serine 403, serine 404, serine 406, serine 407, and serine 414 each carry phosphoserine. Residues 403–414 (SSHSSQTQSGGS) show a composition bias toward low complexity. Threonine 416 carries the phosphothreonine modification. At lysine 417 the chain carries N6-acetyllysine. Residues lysine 417 and lysine 420 each participate in a glycyl lysine isopeptide (Lys-Gly) (interchain with G-Cter in SUMO2) cross-link. The Nuclear localization signal motif lies at 417–422 (KKRKLE). Serine 423, serine 426, serine 429, and serine 431 each carry phosphoserine. Residues 428–545 (SSFSQHARTS…EEVAMRKLVR (118 aa)) form the LTD domain. Lysine 450 is covalently cross-linked (Glycyl lysine isopeptide (Lys-Gly) (interchain with G-Cter in SUMO2); alternate). N6-acetyllysine occurs at positions 450 and 457. 2 positions are modified to phosphoserine: serine 458 and serine 463. Residues lysine 470 and lysine 486 each participate in a glycyl lysine isopeptide (Lys-Gly) (interchain with G-Cter in SUMO2) cross-link. Residue lysine 486 is modified to N6-acetyllysine. Threonine 496 and threonine 505 each carry phosphothreonine. A phosphoserine mark is found at serine 533 and serine 546. A Phosphothreonine modification is found at threonine 548. Positions 555 to 577 (DEDGDDLLHHHHGSHGSSSGDPA) are disordered. Phosphoserine occurs at positions 568 and 571. Lysine 597 participates in a covalent cross-link: Glycyl lysine isopeptide (Lys-Gly) (interchain with G-Cter in SUMO2); alternate. Residue lysine 597 forms a Glycyl lysine isopeptide (Lys-Gly) (interchain with G-Cter in SUMO1); alternate linkage. A disordered region spans residues 598-620 (ASASSSGAQVGGSISSGSSASSV). Residues serine 612, serine 613, serine 616, and serine 619 each carry the phosphoserine modification. O-linked (GlcNAc) serine glycans are attached at residues serine 625 and serine 628. Residues serine 628, serine 632, and serine 636 each carry the phosphoserine modification. Positions 647 to 661 (LLGNSRPRTQSPQNC) are cleaved as a propeptide — removed in Lamin-A/C form. Residue cysteine 661 is modified to Cysteine methyl ester. Cysteine 661 carries S-farnesyl cysteine lipidation. The propeptide at 662 to 664 (SIM) is removed in Prelamin-A/C form and in Lamin-A/C form.

This sequence belongs to the intermediate filament family. Homodimer of lamin A and lamin C. Lamin dimers then assemble into dimeric head-to-tail polymers. Ultimately, two head-to-tail polymers assemble laterally into a protofilament with a uniformly shaped rod of 3.5 nm in diameter. Interacts with lamin-associated polypeptides IA, IB and TMPO-alpha, RB1 and with emerin. Interacts with SREBF1, SREBF2, SUN2 and TMEM43. Interacts with TMEM201. Proteolytically processed isoform A interacts with NARF. Interacts with SUN1. Interacts with MLIP. Interacts with DMPK; may regulate nuclear envelope stability. Interacts with SUV39H1; the interaction increases stability of SUV39H1. Interacts with SYNE2. Interacts with ITSN1 isoform 2. Interacts with IFFO1; enables the formation of an interior nucleoskeleton that is recruited to DNA double-strand breaks. In terms of assembly, interacts with EMD. As to quaternary structure, interacts (via C-terminus) with LEMD2 (via N-terminus) (in vitro). Proteolytic cleavage of the C-terminal of 18 residues of prelamin-A/C results in the production of lamin-A/C. The prelamin-A/C maturation pathway includes farnesylation of CAAX motif by protein farnesyltransferase (FNTA and FNTB), removal of the last three amino acids (-AAX) by RCE1/FACE2 and/or ZMPSTE24, methylation of the C-terminal cysteine by ICMT and endoproteolytic removal of the last 15 C-terminal amino acids by ZMPSTE24. Proteolytic cleavage requires prior farnesylation and methylation, and absence of these blocks cleavage. In terms of processing, farnesylation of prelamin-A/C facilitates nuclear envelope targeting. Post-translationally, phosphorylation plays a key role in lamin organization, subcellular localization and nuclear envelope disintegration. Phosphorylation by CDK1 at Ser-22 and Ser-392 at the onset of mitosis drives lamin disassembly and nuclear envelope breakdown. Phosphorylation at Ser-22 and Ser-392 during interphase promotes localization to the nucleoplasm and regulates lamina assembly. Phosphorylation at Ser-22, Ser-392 and Ser-628 during interphase causes redistribution between the nucleus and the cytoplasm. Phosphorylation at Ser-22 by CDK1 regulates matrix stiffness. Phosphorylation status of Ser-22 determines its localization between double-strand break (DSB) sites and the nuclear matrix. Phosphorylated by ATR at Ser-282 in response to DNA damage, leading to lamin disassembly and nuclear envelope rupture. Phosphorylation also regulates stability in micronuclei arising from genome instability: phosphorylation at Ser-395 by ATR in response to genome instability and double-stranded DNA breaks primes LMNA for subsequent phosphorylation at Ser-392 by CDK1 and micronuclei envelope rupture. The rupture of micronuclear envelope triggers the cGAS-STING pathway thereby activating the type I interferon response and innate immunity. Acetylation by KAT8 is required for nuclear architecture. In terms of processing, sumoylation is necessary for the localization to the nuclear envelope.

The protein localises to the nucleus lamina. It is found in the nucleus envelope. Its subcellular location is the nucleus. The protein resides in the nucleoplasm. It localises to the nucleus matrix. Its function is as follows. Lamins are intermediate filament proteins that assemble into a filamentous meshwork, and which constitute the major components of the nuclear lamina, a fibrous layer on the nucleoplasmic side of the inner nuclear membrane. Lamins provide a framework for the nuclear envelope, bridging the nuclear envelope and chromatin, thereby playing an important role in nuclear assembly, chromatin organization, nuclear membrane and telomere dynamics. Lamin A and C also regulate matrix stiffness by conferring nuclear mechanical properties. The structural integrity of the lamina is strictly controlled by the cell cycle, as seen by the disintegration and formation of the nuclear envelope in prophase and telophase, respectively. Lamin A and C are present in equal amounts in the lamina of mammals. Also invoved in DNA repair: recruited by DNA repair proteins XRCC4 and IFFO1 to the DNA double-strand breaks (DSBs) to prevent chromosome translocation by immobilizing broken DNA ends. Required for normal development of peripheral nervous system and skeletal muscle and for muscle satellite cell proliferation. Required for osteoblastogenesis and bone formation. Also prevents fat infiltration of muscle and bone marrow, helping to maintain the volume and strength of skeletal muscle and bone. Required for cardiac homeostasis. Prelamin-A/C can accelerate smooth muscle cell senescence. It acts to disrupt mitosis and induce DNA damage in vascular smooth muscle cells (VSMCs), leading to mitotic failure, genomic instability, and premature senescence. The protein is Prelamin-A/C (LMNA) of Sus scrofa (Pig).